The primary structure comprises 517 residues: Ribonuclease Y (517 aa).

Residues 3-23 traverse the membrane as a helical segment; it reads AILYVIVAVIALILGGAAGVA. The KH domain occupies 207–292; the sequence is TVTVVSLPND…EMVEKAQKEV (86 aa). The region spanning 333–426 is the HD domain; sequence VLKHSIEVAH…VAAADAISAA (94 aa).

Belongs to the RNase Y family.

The protein localises to the cell membrane. Its function is as follows. Endoribonuclease that initiates mRNA decay. This is Ribonuclease Y from Symbiobacterium thermophilum (strain DSM 24528 / JCM 14929 / IAM 14863 / T).